Consider the following 694-residue polypeptide: Elongation factor G (694 aa).

The tr-type G domain maps to 8–283 (ERYRNIGIMA…AVIDYLPAPV (276 aa)). GTP contacts are provided by residues 17 to 24 (AHIDAGKT), 81 to 85 (DTPGH), and 135 to 138 (NKMD).

Belongs to the TRAFAC class translation factor GTPase superfamily. Classic translation factor GTPase family. EF-G/EF-2 subfamily.

The protein localises to the cytoplasm. In terms of biological role, catalyzes the GTP-dependent ribosomal translocation step during translation elongation. During this step, the ribosome changes from the pre-translocational (PRE) to the post-translocational (POST) state as the newly formed A-site-bound peptidyl-tRNA and P-site-bound deacylated tRNA move to the P and E sites, respectively. Catalyzes the coordinated movement of the two tRNA molecules, the mRNA and conformational changes in the ribosome. The sequence is that of Elongation factor G from Paramagnetospirillum magneticum (strain ATCC 700264 / AMB-1) (Magnetospirillum magneticum).